The following is a 348-amino-acid chain: Phospho-2-dehydro-3-deoxyheptonate aldolase, Trp-sensitive (348 aa).

It belongs to the class-I DAHP synthase family.

It catalyses the reaction D-erythrose 4-phosphate + phosphoenolpyruvate + H2O = 7-phospho-2-dehydro-3-deoxy-D-arabino-heptonate + phosphate. The protein operates within metabolic intermediate biosynthesis; chorismate biosynthesis; chorismate from D-erythrose 4-phosphate and phosphoenolpyruvate: step 1/7. In terms of biological role, stereospecific condensation of phosphoenolpyruvate (PEP) and D-erythrose-4-phosphate (E4P) giving rise to 3-deoxy-D-arabino-heptulosonate-7-phosphate (DAHP). In Salmonella typhimurium (strain LT2 / SGSC1412 / ATCC 700720), this protein is Phospho-2-dehydro-3-deoxyheptonate aldolase, Trp-sensitive (aroH).